The following is a 289-amino-acid chain: Caffeoylpyruvate hydrolase (289 aa).

Residues E140, E142, and D171 each coordinate a divalent metal cation.

This sequence belongs to the FAH family. In terms of assembly, homodimer. Requires Mg(2+) as cofactor. Mn(2+) serves as cofactor.

It carries out the reaction (E)-caffeoylpyruvate + H2O = (E)-caffeate + pyruvate + H(+). The protein operates within secondary metabolite biosynthesis. Caffeoylpyruvate hydrolase; part of the gene cluster that mediates the fungal bioluminescence cycle. Involved in the recycling of oxyluciferin, a pyruvic acid adduct of caffeic acid, to caffeic acid. The fungal bioluminescence cycle begins with the hispidin synthetase that catalyzes the formation of hispidin which is further hydroxylated by the hispidin-3-hydroxylase, yielding the fungal luciferin 3-hydroxyhispidin. The luciferase then produces an endoperoxide as a high-energy intermediate with decomposition that yields oxyluciferin (also known as caffeoylpyruvate) and light emission. Oxyluciferin can be recycled to caffeic acid by caffeoylpyruvate hydrolase. The chain is Caffeoylpyruvate hydrolase from Neonothopanus nambi (Agaricus nambi).